Reading from the N-terminus, the 218-residue chain is Probable GTP-binding protein EngB (218 aa).

Residues D44–T218 form the EngB-type G domain. GTP is bound by residues G52–S59, G79–E83, D97–G100, T164–D167, and T198–S200. Positions 59 and 81 each coordinate Mg(2+).

It belongs to the TRAFAC class TrmE-Era-EngA-EngB-Septin-like GTPase superfamily. EngB GTPase family. It depends on Mg(2+) as a cofactor.

Necessary for normal cell division and for the maintenance of normal septation. This is Probable GTP-binding protein EngB from Jannaschia sp. (strain CCS1).